The following is a 179-amino-acid chain: Large ribosomal subunit protein uL6 (179 aa).

It belongs to the universal ribosomal protein uL6 family. Part of the 50S ribosomal subunit.

In terms of biological role, this protein binds to the 23S rRNA, and is important in its secondary structure. It is located near the subunit interface in the base of the L7/L12 stalk, and near the tRNA binding site of the peptidyltransferase center. This chain is Large ribosomal subunit protein uL6, found in Bifidobacterium adolescentis (strain ATCC 15703 / DSM 20083 / NCTC 11814 / E194a).